A 583-amino-acid polypeptide reads, in one-letter code: Propane 2-monooxygenase operon transcriptional activator MimR (583 aa).

A Sigma-54 factor interaction domain is found at 320–513 (LAGRSSSFRR…LRHVLTETLR (194 aa)). Residues 348–355 (GEKGSGRT) and 395–404 (DADFAVIVAD) contribute to the ATP site.

Its function is as follows. Acts as a transcriptional activator of the mimABCD operon encoding the propane 2-monooxygenase complex. In Mycolicibacterium goodii (Mycobacterium goodii), this protein is Propane 2-monooxygenase operon transcriptional activator MimR.